The chain runs to 146 residues: Prostaglandin E synthase 3 (146 aa).

A CS domain is found at 1 to 76; sequence VFIEFCVEDS…ESGQAWPRLT (76 aa). The tract at residues 110–146 is disordered; that stretch reads SEMMNNMGGDDDVDLPEVDGADDDSPDSDDEKMPDLE. The span at 118-139 shows a compositional bias: acidic residues; the sequence is GDDDVDLPEVDGADDDSPDSDD.

It belongs to the p23/wos2 family. As to quaternary structure, binds to telomerase. Binds to the progesterone receptor.

The protein localises to the cytoplasm. It catalyses the reaction prostaglandin H2 = prostaglandin E2. It participates in lipid metabolism; prostaglandin biosynthesis. Its function is as follows. Molecular chaperone. This is Prostaglandin E synthase 3 (PTGES3) from Gallus gallus (Chicken).